The primary structure comprises 297 residues: 4-hydroxy-tetrahydrodipicolinate synthase (297 aa).

Thr50 contacts pyruvate. The Proton donor/acceptor role is filled by Tyr138. Lys166 acts as the Schiff-base intermediate with substrate in catalysis. Ile208 lines the pyruvate pocket.

The protein belongs to the DapA family. As to quaternary structure, homotetramer; dimer of dimers.

It is found in the cytoplasm. It carries out the reaction L-aspartate 4-semialdehyde + pyruvate = (2S,4S)-4-hydroxy-2,3,4,5-tetrahydrodipicolinate + H2O + H(+). Its pathway is amino-acid biosynthesis; L-lysine biosynthesis via DAP pathway; (S)-tetrahydrodipicolinate from L-aspartate: step 3/4. Catalyzes the condensation of (S)-aspartate-beta-semialdehyde [(S)-ASA] and pyruvate to 4-hydroxy-tetrahydrodipicolinate (HTPA). The sequence is that of 4-hydroxy-tetrahydrodipicolinate synthase from Gluconobacter oxydans (strain 621H) (Gluconobacter suboxydans).